The primary structure comprises 504 residues: Maturase K (504 aa).

The protein belongs to the intron maturase 2 family. MatK subfamily.

It localises to the plastid. Its subcellular location is the chloroplast. Functionally, usually encoded in the trnK tRNA gene intron. Probably assists in splicing its own and other chloroplast group II introns. This is Maturase K from Quercus gemelliflora (Pasang hiris).